A 433-amino-acid polypeptide reads, in one-letter code: GTPase Obg (433 aa).

Residues 4–162 enclose the Obg domain; the sequence is EDFVDRVTIF…RWLELELKLL (159 aa). The 172-residue stretch at 163–334 folds into the OBG-type G domain; it reads ADAGLIGFPN…LKQKIFEIVG (172 aa). Residues 169-176, 194-198, 216-219, 286-289, and 315-317 each bind GTP; these read GFPNVGKS, FTTLV, DIPG, NKID, and SAL. Mg(2+)-binding residues include Ser-176 and Thr-196. One can recognise an OCT domain in the interval 356-433; it reads TKIEERFDFE…IGQYSFEYKE (78 aa).

The protein belongs to the TRAFAC class OBG-HflX-like GTPase superfamily. OBG GTPase family. In terms of assembly, monomer. Mg(2+) is required as a cofactor.

It localises to the cytoplasm. In terms of biological role, an essential GTPase which binds GTP, GDP and possibly (p)ppGpp with moderate affinity, with high nucleotide exchange rates and a fairly low GTP hydrolysis rate. Plays a role in control of the cell cycle, stress response, ribosome biogenesis and in those bacteria that undergo differentiation, in morphogenesis control. In Pseudothermotoga lettingae (strain ATCC BAA-301 / DSM 14385 / NBRC 107922 / TMO) (Thermotoga lettingae), this protein is GTPase Obg.